The sequence spans 236 residues: Pyridoxine 5'-phosphate synthase (236 aa).

Asn-6 is a 3-amino-2-oxopropyl phosphate binding site. 8–9 (DH) provides a ligand contact to 1-deoxy-D-xylulose 5-phosphate. Residue Arg-17 coordinates 3-amino-2-oxopropyl phosphate. His-42 functions as the Proton acceptor in the catalytic mechanism. 2 residues coordinate 1-deoxy-D-xylulose 5-phosphate: Arg-44 and His-49. Residue Glu-69 is the Proton acceptor of the active site. Thr-99 is a binding site for 1-deoxy-D-xylulose 5-phosphate. His-190 functions as the Proton donor in the catalytic mechanism. Residues Gly-191 and 212–213 (GH) contribute to the 3-amino-2-oxopropyl phosphate site.

This sequence belongs to the PNP synthase family. Homooctamer; tetramer of dimers.

Its subcellular location is the cytoplasm. The catalysed reaction is 3-amino-2-oxopropyl phosphate + 1-deoxy-D-xylulose 5-phosphate = pyridoxine 5'-phosphate + phosphate + 2 H2O + H(+). Its pathway is cofactor biosynthesis; pyridoxine 5'-phosphate biosynthesis; pyridoxine 5'-phosphate from D-erythrose 4-phosphate: step 5/5. In terms of biological role, catalyzes the complicated ring closure reaction between the two acyclic compounds 1-deoxy-D-xylulose-5-phosphate (DXP) and 3-amino-2-oxopropyl phosphate (1-amino-acetone-3-phosphate or AAP) to form pyridoxine 5'-phosphate (PNP) and inorganic phosphate. This Chloroherpeton thalassium (strain ATCC 35110 / GB-78) protein is Pyridoxine 5'-phosphate synthase.